Here is a 469-residue protein sequence, read N- to C-terminus: Equisetin cluster transcription factor eqxR (469 aa).

The zn(2)-C6 fungal-type DNA-binding region spans 13–47 (CDRCRSHKLKCTVAPENSRSGSNRCTRCIRAQVTC). The tract at residues 58-84 (STNVKKADIKSGTNSQETTSMQASTIV) is disordered. A compositionally biased stretch (polar residues) spans 68-82 (SGTNSQETTSMQAST).

Its subcellular location is the nucleus. Transcription factor that regulates the expression of the gene cluster that mediates the biosynthesis of Equisetin. The protein is Equisetin cluster transcription factor eqxR of Fusarium heterosporum.